Reading from the N-terminus, the 251-residue chain is Triosephosphate isomerase (251 aa).

Asparagine 9–lysine 11 is a substrate binding site. The active-site Electrophile is the histidine 95. Glutamate 167 acts as the Proton acceptor in catalysis. Substrate is bound by residues glycine 173, serine 213, and glycine 234–glycine 235.

The protein belongs to the triosephosphate isomerase family. Homodimer.

Its subcellular location is the cytoplasm. It catalyses the reaction D-glyceraldehyde 3-phosphate = dihydroxyacetone phosphate. The protein operates within carbohydrate biosynthesis; gluconeogenesis. It functions in the pathway carbohydrate degradation; glycolysis; D-glyceraldehyde 3-phosphate from glycerone phosphate: step 1/1. Functionally, involved in the gluconeogenesis. Catalyzes stereospecifically the conversion of dihydroxyacetone phosphate (DHAP) to D-glyceraldehyde-3-phosphate (G3P). This chain is Triosephosphate isomerase, found in Trichlorobacter lovleyi (strain ATCC BAA-1151 / DSM 17278 / SZ) (Geobacter lovleyi).